Here is a 267-residue protein sequence, read N- to C-terminus: Ribosomal RNA small subunit methyltransferase A (267 aa).

The S-adenosyl-L-methionine site is built by Asn16, Leu18, Gly43, Glu64, Asp89, and Asn110.

It belongs to the class I-like SAM-binding methyltransferase superfamily. rRNA adenine N(6)-methyltransferase family. RsmA subfamily.

The protein localises to the cytoplasm. It catalyses the reaction adenosine(1518)/adenosine(1519) in 16S rRNA + 4 S-adenosyl-L-methionine = N(6)-dimethyladenosine(1518)/N(6)-dimethyladenosine(1519) in 16S rRNA + 4 S-adenosyl-L-homocysteine + 4 H(+). Functionally, specifically dimethylates two adjacent adenosines (A1518 and A1519) in the loop of a conserved hairpin near the 3'-end of 16S rRNA in the 30S particle. May play a critical role in biogenesis of 30S subunits. This is Ribosomal RNA small subunit methyltransferase A from Pseudomonas putida (strain ATCC 47054 / DSM 6125 / CFBP 8728 / NCIMB 11950 / KT2440).